Here is a 527-residue protein sequence, read N- to C-terminus: Peptide chain release factor 3 (527 aa).

Residues 9–278 (DIRRTFAIIS…GLTQWAPKPQ (270 aa)) enclose the tr-type G domain. Residues 18–25 (SHPDAGKT), 86–90 (DTPGH), and 140–143 (NKCD) each bind GTP.

The protein belongs to the TRAFAC class translation factor GTPase superfamily. Classic translation factor GTPase family. PrfC subfamily.

It is found in the cytoplasm. Increases the formation of ribosomal termination complexes and stimulates activities of RF-1 and RF-2. It binds guanine nucleotides and has strong preference for UGA stop codons. It may interact directly with the ribosome. The stimulation of RF-1 and RF-2 is significantly reduced by GTP and GDP, but not by GMP. The chain is Peptide chain release factor 3 from Shewanella denitrificans (strain OS217 / ATCC BAA-1090 / DSM 15013).